The following is a 423-amino-acid chain: uncharacterized protein (423 aa).

Mg(2+)-binding residues include Lys181, Asp183, and Glu184. Lys181 carries the post-translational modification N6-carboxylysine.

Belongs to the RuBisCO large chain family. Type IV subfamily. Mg(2+) is required as a cofactor.

Its function is as follows. May be involved in sulfur metabolism and oxidative stress response. Does not show RuBisCO activity. This is an uncharacterized protein from Bordetella bronchiseptica (strain ATCC BAA-588 / NCTC 13252 / RB50) (Alcaligenes bronchisepticus).